Reading from the N-terminus, the 79-residue chain is Conotoxin Kt6.1 (79 aa).

The first 22 residues, 1-22, serve as a signal peptide directing secretion; that stretch reads MKLTCVLIISVLFLTASQLITA. Positions 23-47 are excised as a propeptide; it reads VYSRDKQQYRAARLRDEMRNLKGAR. 3 disulfide bridges follow: C49–C62, C56–C67, and C61–C77. 2 positions are modified to 4-hydroxyproline: P60 and P63.

The protein belongs to the conotoxin O1 superfamily. As to expression, expressed by the venom duct.

It is found in the secreted. In terms of biological role, ion channel inhibitor that inhibits the increase in intracellular calcium upon depolarization in DRG neurons. In vivo, both intraperitoneal and intracranial injections into mice induce hyperactivity. In Conus kintoki (Cone snail), this protein is Conotoxin Kt6.1.